Reading from the N-terminus, the 285-residue chain is 2,3,4,5-tetrahydropyridine-2,6-dicarboxylate N-succinyltransferase (285 aa).

The protein belongs to the transferase hexapeptide repeat family.

It localises to the cytoplasm. The enzyme catalyses (S)-2,3,4,5-tetrahydrodipicolinate + succinyl-CoA + H2O = (S)-2-succinylamino-6-oxoheptanedioate + CoA. The protein operates within amino-acid biosynthesis; L-lysine biosynthesis via DAP pathway; LL-2,6-diaminopimelate from (S)-tetrahydrodipicolinate (succinylase route): step 1/3. This Beijerinckia indica subsp. indica (strain ATCC 9039 / DSM 1715 / NCIMB 8712) protein is 2,3,4,5-tetrahydropyridine-2,6-dicarboxylate N-succinyltransferase.